The following is a 341-amino-acid chain: NADH-ubiquinone oxidoreductase chain 2 (341 aa).

The next 9 membrane-spanning stretches (helical) occupy residues 8-28 (IFLI…SWLG), 61-81 (FLTQ…LMFL), 95-115 (ILIL…FWFP), 145-165 (FIYN…SLGG), 174-191 (LMAF…LAMM), 195-215 (MLWM…VLMF), 238-258 (LLIF…GFLP), 272-292 (LFIL…YLRL), and 321-341 (LIFN…YIIM).

Belongs to the complex I subunit 2 family.

Its subcellular location is the mitochondrion inner membrane. It catalyses the reaction a ubiquinone + NADH + 5 H(+)(in) = a ubiquinol + NAD(+) + 4 H(+)(out). In terms of biological role, core subunit of the mitochondrial membrane respiratory chain NADH dehydrogenase (Complex I) that is believed to belong to the minimal assembly required for catalysis. Complex I functions in the transfer of electrons from NADH to the respiratory chain. The immediate electron acceptor for the enzyme is believed to be ubiquinone. This chain is NADH-ubiquinone oxidoreductase chain 2 (mt:ND2), found in Anopheles gambiae (African malaria mosquito).